Consider the following 346-residue polypeptide: Small ribosomal subunit biogenesis GTPase RsgA (346 aa).

Positions 1-26 (MAKRKLTQNQTRRIQSNNAKTLHRHK) are disordered. Residues 7–20 (TQNQTRRIQSNNAK) show a composition bias toward polar residues. The CP-type G domain maps to 103 to 271 (ENEISRPDYY…LIDSPGIREF (169 aa)). Residues 159–162 (NKVD) and 213–221 (GQSGVGKSS) each bind GTP. 4 residues coordinate Zn(2+): C295, C300, H302, and C308.

This sequence belongs to the TRAFAC class YlqF/YawG GTPase family. RsgA subfamily. Monomer. Associates with 30S ribosomal subunit, binds 16S rRNA. Zn(2+) serves as cofactor.

The protein resides in the cytoplasm. One of several proteins that assist in the late maturation steps of the functional core of the 30S ribosomal subunit. Helps release RbfA from mature subunits. May play a role in the assembly of ribosomal proteins into the subunit. Circularly permuted GTPase that catalyzes slow GTP hydrolysis, GTPase activity is stimulated by the 30S ribosomal subunit. The chain is Small ribosomal subunit biogenesis GTPase RsgA from Haemophilus influenzae (strain PittGG).